Here is a 537-residue protein sequence, read N- to C-terminus: Exoglucanase 1 (537 aa).

An N-terminal signal peptide occupies residues 1-18 (MKGSISYQIYKGALLLSA). The catalytic stretch occupies residues 19 to 453 (LLNSVSAQQV…YVIYSNIKTG (435 aa)). A glycan (N-linked (GlcNAc...) asparagine) is linked at Asn-136. The active-site Nucleophile is the Glu-235. Glu-240 functions as the Proton donor in the catalytic mechanism. N-linked (GlcNAc...) asparagine glycans are attached at residues Asn-414 and Asn-456. A linker region spans residues 454–477 (PLNSTFTGGTTSSSSTTTTTSKST). Positions 458–502 (TFTGGTTSSSSTTTTTSKSTSTSSSSKTTTTVTTTTTSSGSSGTG) are enriched in low complexity. Residues 458–503 (TFTGGTTSSSSTTTTTSKSTSTSSSSKTTTTVTTTTTSSGSSGTGA) are disordered. A CBM1 domain is found at 501–537 (TGARDWAQCGGNGWTGPTTCVSPYTCTKQNDWYSQCL). Intrachain disulfides connect Cys-509–Cys-526 and Cys-520–Cys-536.

Belongs to the glycosyl hydrolase 7 (cellulase C) family.

The protein localises to the secreted. It catalyses the reaction Hydrolysis of (1-&gt;4)-beta-D-glucosidic linkages in cellulose and cellotetraose, releasing cellobiose from the non-reducing ends of the chains.. The sequence is that of Exoglucanase 1 (cbh1) from Penicillium janthinellum (Penicillium vitale).